A 153-amino-acid chain; its full sequence is Facilitator of iron transport 2 (153 aa).

The signal sequence occupies residues Met1 to Ala18. The interval Thr73–Thr98 is disordered. Low complexity predominate over residues Thr85 to Thr98. Asn92 is a glycosylation site (N-linked (GlcNAc...) asparagine). Gly130 carries GPI-anchor amidated glycine lipidation. Positions Ala131–Leu153 are cleaved as a propeptide — removed in mature form.

The GPI-anchor is attached to the protein in the endoplasmic reticulum and serves to target the protein to the cell surface. There, the glucosamine-inositol phospholipid moiety is cleaved off and the GPI-modified mannoprotein is covalently attached via its lipidless GPI glycan remnant to the 1,6-beta-glucan of the outer cell wall layer.

It localises to the secreted. It is found in the cell wall. Its subcellular location is the membrane. Its function is as follows. Involved in the uptake of non-siderophore and siderophore sources of iron. Has a role in the retention of iron in the cell wall and periplasmic space. In Saccharomyces cerevisiae (strain ATCC 204508 / S288c) (Baker's yeast), this protein is Facilitator of iron transport 2 (FIT2).